A 61-amino-acid chain; its full sequence is UPF0434 protein TM1040_0056 (61 aa).

Belongs to the UPF0434 family.

This Ruegeria sp. (strain TM1040) (Silicibacter sp.) protein is UPF0434 protein TM1040_0056.